Reading from the N-terminus, the 310-residue chain is tRNA-cytidine(32) 2-sulfurtransferase (310 aa).

Residues 44-49 (SGGKDS) carry the PP-loop motif motif. [4Fe-4S] cluster-binding residues include C119, C122, and C210.

The protein belongs to the TtcA family. As to quaternary structure, homodimer. Mg(2+) serves as cofactor. Requires [4Fe-4S] cluster as cofactor.

Its subcellular location is the cytoplasm. The catalysed reaction is cytidine(32) in tRNA + S-sulfanyl-L-cysteinyl-[cysteine desulfurase] + AH2 + ATP = 2-thiocytidine(32) in tRNA + L-cysteinyl-[cysteine desulfurase] + A + AMP + diphosphate + H(+). The protein operates within tRNA modification. Functionally, catalyzes the ATP-dependent 2-thiolation of cytidine in position 32 of tRNA, to form 2-thiocytidine (s(2)C32). The sulfur atoms are provided by the cysteine/cysteine desulfurase (IscS) system. The chain is tRNA-cytidine(32) 2-sulfurtransferase from Saccharophagus degradans (strain 2-40 / ATCC 43961 / DSM 17024).